A 257-amino-acid polypeptide reads, in one-letter code: ATP synthase subunit a (257 aa).

The next 6 helical transmembrane spans lie at 34 to 54, 93 to 113, 122 to 142, 149 to 169, 187 to 207, and 210 to 230; these read ITNI…FSIL, YFPF…IGMV, HFIL…VLGF, FFSL…LVLI, ANIL…YNIM, and GIIF…FSGL.

Belongs to the ATPase A chain family. In terms of assembly, F-type ATPases have 2 components, CF(1) - the catalytic core - and CF(0) - the membrane proton channel. CF(1) has five subunits: alpha(3), beta(3), gamma(1), delta(1), epsilon(1). CF(0) has three main subunits: a, b and c.

It localises to the mitochondrion inner membrane. Mitochondrial membrane ATP synthase (F(1)F(0) ATP synthase or Complex V) produces ATP from ADP in the presence of a proton gradient across the membrane which is generated by electron transport complexes of the respiratory chain. F-type ATPases consist of two structural domains, F(1) - containing the extramembraneous catalytic core and F(0) - containing the membrane proton channel, linked together by a central stalk and a peripheral stalk. During catalysis, ATP synthesis in the catalytic domain of F(1) is coupled via a rotary mechanism of the central stalk subunits to proton translocation. Key component of the proton channel; it may play a direct role in the translocation of protons across the membrane. This chain is ATP synthase subunit a (ATP6), found in Cochliobolus heterostrophus (Southern corn leaf blight fungus).